The sequence spans 1150 residues: C5a peptidase (1150 aa).

The N-terminal stretch at 1-31 is a signal peptide; the sequence is MRKKQKLPFDKLAIALMSTSILLNAQSDIKA. A disordered region spans residues 33–73; that stretch reads TVTEDTPAAEQAVETPQPTAVSEEVPSSKETKTPQTPDNAE. The Peptidase S8 domain occupies 99–581; it reads KATIRDLNDP…AGAVDAKKAS (483 aa). Catalysis depends on charge relay system residues aspartate 130, histidine 193, and serine 512. 2 stretches are compositionally biased toward basic and acidic residues: residues 1029-1054 and 1061-1073; these read EGHS…KPEQ and PDKK…EKDS. The tract at residues 1029 to 1116 is disordered; it reads EGHSNKPEQD…RDQLPTTNDK (88 aa). A run of 3 repeats spans residues 1034-1050, 1051-1067, and 1068-1084. Residues 1034–1084 are 3 X 17 AA tandem repeats; it reads KPEQDGSDQAPDKKPEAKPEQDGSGQTPDKKPETKPEKDSSGQTPGKTPQK. A compositionally biased stretch (polar residues) spans 1075–1089; it reads GQTPGKTPQKGQPSR. An LPXTG sorting signal motif is present at residues 1110–1114; the sequence is LPTTN. Threonine 1113 carries the pentaglycyl murein peptidoglycan amidated threonine modification. A propeptide spans 1114–1150 (removed by sortase); sequence NDKDTNRLHLLKLVMTTFFFGLVAHIFKTKRQKETKK.

The protein belongs to the peptidase S8 family. Post-translationally, cleaved by SpeB protease; leading to its degradation. Degradation by SpeB is probably strictly regulated to preserve integrity of C5a peptidase.

The protein resides in the secreted. Its subcellular location is the cell wall. The enzyme catalyses The primary cleavage site is at 67-His-|-Lys-68 in human C5a with a minor secondary cleavage site at 58-Ala-|-Ser-59.. Its function is as follows. This virulence factor of S.pyogenes specifically cleaves the human serum chemotaxin C5a at '68-Lys-|-Asp-69' bond near its C-terminus, destroying its ability to serve as a chemoattractant. This Streptococcus pyogenes serotype M18 (strain MGAS8232) protein is C5a peptidase (scpA).